Here is a 519-residue protein sequence, read N- to C-terminus: Glucose-1-phosphate adenylyltransferase large subunit 3, chloroplastic/amyloplastic (519 aa).

The transit peptide at methionine 1–arginine 74 directs the protein to the chloroplast.

This sequence belongs to the bacterial/plant glucose-1-phosphate adenylyltransferase family. Heterotetramer composed of two small and two large subunits. In terms of tissue distribution, expressed in stems.

The protein resides in the plastid. Its subcellular location is the chloroplast. The enzyme catalyses alpha-D-glucose 1-phosphate + ATP + H(+) = ADP-alpha-D-glucose + diphosphate. The protein operates within glycan biosynthesis; starch biosynthesis. Its activity is regulated as follows. Activated by 3'phosphoglycerate, inhibited by orthophosphate. Allosteric regulation. Involved in synthesis of starch. Catalyzes the synthesis of ADP-glucose, a molecule that serves as an activated glycosyl donor for alpha-1,4-glucan synthesis. Essential for starch synthesis in leaf chloroplasts. This chain is Glucose-1-phosphate adenylyltransferase large subunit 3, chloroplastic/amyloplastic, found in Oryza sativa subsp. japonica (Rice).